Consider the following 337-residue polypeptide: Bifunctional methylenetetrahydrofolate dehydrogenase/cyclohydrolase, mitochondrial (337 aa).

Residues 1–30 constitute a mitochondrion transit peptide; that stretch reads MATALCPLRALGQTAFRPRTRRLHLSAPRA. Substrate-binding positions include 79–83 and 126–128; these read YVLNK and VQL. Residues 195-197 and arginine 228 contribute to the NAD(+) site; that span reads GRS. 304-308 is a binding site for substrate; it reads PGGVG.

Belongs to the tetrahydrofolate dehydrogenase/cyclohydrolase family. Mg(2+) is required as a cofactor.

Its subcellular location is the mitochondrion. The enzyme catalyses (6R)-5,10-methylene-5,6,7,8-tetrahydrofolate + NAD(+) = (6R)-5,10-methenyltetrahydrofolate + NADH. It catalyses the reaction (6R)-5,10-methenyltetrahydrofolate + H2O = (6R)-10-formyltetrahydrofolate + H(+). Functionally, although its dehydrogenase activity is NAD-specific, it can also utilize NADP at a reduced efficiency. The chain is Bifunctional methylenetetrahydrofolate dehydrogenase/cyclohydrolase, mitochondrial (MTHFD2) from Gallus gallus (Chicken).